Reading from the N-terminus, the 225-residue chain is U2 small nuclear ribonucleoprotein B'' (225 aa).

One can recognise an RRM 1 domain in the interval 7-86 (HTIYINNMND…KPMRIQYAKT (80 aa)). Residues 99 to 145 (ADKEKKKEKKKAKTVEQTATTTNKKPGQGTPNSANTQGNSTPNPQVP) form a disordered region. Lysine 111 is modified (N6-acetyllysine; alternate). Residue lysine 111 forms a Glycyl lysine isopeptide (Lys-Gly) (interchain with G-Cter in SUMO2); alternate linkage. The span at 113–123 (VEQTATTTNKK) shows a compositional bias: low complexity. Residues 127 to 141 (GTPNSANTQGNSTPN) are compositionally biased toward polar residues. Tyrosine 151 carries the phosphotyrosine modification. The region spanning 151–225 (YILFLNNLPE…HAMKITYAKK (75 aa)) is the RRM 2 domain.

It belongs to the RRM U1 A/B'' family. Identified in the spliceosome B complex. Identified in the spliceosome C complex. Present in a spliceosome complex assembled in vitro, and composed of SNRPB2, HPRP8BP and CRNKL1. Contributes to the binding of stem loop IV of U2 snRNA with SNRPP1.

It localises to the nucleus. In terms of biological role, involved in pre-mRNA splicing as component of the spliceosome. Associated with sn-RNP U2, where it contributes to the binding of stem loop IV of U2 snRNA. This is U2 small nuclear ribonucleoprotein B'' (SNRPB2) from Homo sapiens (Human).